The chain runs to 571 residues: Urease subunit alpha (571 aa).

The region spanning 129–571 (GGIDTHIHFI…LPMAQRYFLF (443 aa)) is the Urease domain. Positions 134, 136, and 217 each coordinate Ni(2+). Lys-217 bears the N6-carboxylysine mark. His-219 provides a ligand contact to substrate. Ni(2+)-binding residues include His-246 and His-272. The active-site Proton donor is the His-320. Asp-360 serves as a coordination point for Ni(2+).

The protein belongs to the metallo-dependent hydrolases superfamily. Urease alpha subunit family. In terms of assembly, heterotrimer of UreA (gamma), UreB (beta) and UreC (alpha) subunits. Three heterotrimers associate to form the active enzyme. Requires Ni cation as cofactor. Post-translationally, carboxylation allows a single lysine to coordinate two nickel ions.

It is found in the cytoplasm. It carries out the reaction urea + 2 H2O + H(+) = hydrogencarbonate + 2 NH4(+). It participates in nitrogen metabolism; urea degradation; CO(2) and NH(3) from urea (urease route): step 1/1. In Cupriavidus pinatubonensis (strain JMP 134 / LMG 1197) (Cupriavidus necator (strain JMP 134)), this protein is Urease subunit alpha.